Here is a 171-residue protein sequence, read N- to C-terminus: Co-chaperone protein HscB homolog (171 aa).

In terms of domain architecture, J spans 2–74 (NYFELFGLPI…LRRAEYLLSL (73 aa)).

It belongs to the HscB family. In terms of assembly, interacts with HscA and stimulates its ATPase activity.

Co-chaperone involved in the maturation of iron-sulfur cluster-containing proteins. Seems to help targeting proteins to be folded toward HscA. The sequence is that of Co-chaperone protein HscB homolog from Vibrio cholerae serotype O1 (strain M66-2).